We begin with the raw amino-acid sequence, 436 residues long: Serine--tRNA ligase (436 aa).

The span at 43–55 (TKSEQLKQKRNEV) shows a compositional bias: basic and acidic residues. The interval 43 to 69 (TKSEQLKQKRNEVSDQIAQAKRNKEDA) is disordered. 237-239 (TAE) is an L-serine binding site. ATP is bound at residue 268–270 (RSE). Glu291 serves as a coordination point for L-serine. 355–358 (EISS) is a binding site for ATP. Residue Ser390 participates in L-serine binding.

It belongs to the class-II aminoacyl-tRNA synthetase family. Type-1 seryl-tRNA synthetase subfamily. In terms of assembly, homodimer. The tRNA molecule binds across the dimer.

Its subcellular location is the cytoplasm. The catalysed reaction is tRNA(Ser) + L-serine + ATP = L-seryl-tRNA(Ser) + AMP + diphosphate + H(+). It catalyses the reaction tRNA(Sec) + L-serine + ATP = L-seryl-tRNA(Sec) + AMP + diphosphate + H(+). It participates in aminoacyl-tRNA biosynthesis; selenocysteinyl-tRNA(Sec) biosynthesis; L-seryl-tRNA(Sec) from L-serine and tRNA(Sec): step 1/1. Catalyzes the attachment of serine to tRNA(Ser). Is also able to aminoacylate tRNA(Sec) with serine, to form the misacylated tRNA L-seryl-tRNA(Sec), which will be further converted into selenocysteinyl-tRNA(Sec). The sequence is that of Serine--tRNA ligase from Lactobacillus gasseri (strain ATCC 33323 / DSM 20243 / BCRC 14619 / CIP 102991 / JCM 1131 / KCTC 3163 / NCIMB 11718 / NCTC 13722 / AM63).